A 270-amino-acid chain; its full sequence is D-aminoacyl-tRNA deacylase (270 aa).

The protein belongs to the DtdA deacylase family. As to quaternary structure, monomer. Requires Zn(2+) as cofactor.

The catalysed reaction is a D-aminoacyl-tRNA + H2O = a tRNA + a D-alpha-amino acid + H(+). It carries out the reaction glycyl-tRNA(Ala) + H2O = tRNA(Ala) + glycine + H(+). Functionally, D-aminoacyl-tRNA deacylase with broad substrate specificity. By recycling D-aminoacyl-tRNA to D-amino acids and free tRNA molecules, this enzyme counteracts the toxicity associated with the formation of D-aminoacyl-tRNA entities in vivo. The sequence is that of D-aminoacyl-tRNA deacylase from Pyrococcus furiosus (strain ATCC 43587 / DSM 3638 / JCM 8422 / Vc1).